Reading from the N-terminus, the 906-residue chain is Nuclear factor NF-kappa-B p100 subunit (906 aa).

The 190-residue stretch at Ala-34 to Gly-223 folds into the RHD domain. A Nuclear localization signal motif is present at residues Arg-336–Lys-340. The GRR stretch occupies residues Phe-345 to Phe-374. ANK repeat units lie at residues Asn-472–Ser-501, Leu-511–Leu-540, Tyr-544–Pro-573, Gln-582–Gly-611, Gly-616–Ser-646, and Ala-650–Arg-679. Disordered regions lie at residues Val-677–Gln-734 and Glu-857–His-906. Residues Pro-684–Ser-695 show a composition bias toward low complexity. A compositionally biased stretch (acidic residues) spans Thr-697–Gln-708. Residues Arg-771–Glu-857 form the Death domain.

As to quaternary structure, component of the NF-kappa-B RelB-p52 complex. While translation occurs, the particular unfolded structure after the GRR repeat promotes the generation of p52 making it an acceptable substrate for the proteasome. This process is known as cotranslational processing. The processed form is active and the unprocessed form acts as an inhibitor (I kappa B-like), being able to form cytosolic complexes with NF-kappa B, trapping it in the cytoplasm. Complete folding of the region downstream of the GRR repeat precludes processing. In terms of processing, constitutive processing is tightly suppressed by its C-terminal processing inhibitory domain, named PID, which contains the death domain.

Its subcellular location is the nucleus. The protein resides in the cytoplasm. NF-kappa-B is a pleiotropic transcription factor present in almost all cell types and is the endpoint of a series of signal transduction events that are initiated by a vast array of stimuli related to many biological processes such as inflammation, immunity, differentiation, cell growth, tumorigenesis and apoptosis. NF-kappa-B is a homo- or heterodimeric complex formed by the Rel-like domain-containing proteins RELA/p65, RELB, NFKB1/p105, NFKB1/p50, REL and NFKB2/p52. The dimers bind at kappa-B sites in the DNA of their target genes and the individual dimers have distinct preferences for different kappa-B sites that they can bind with distinguishable affinity and specificity. Different dimer combinations act as transcriptional activators or repressors, respectively. NF-kappa-B is controlled by various mechanisms of post-translational modification and subcellular compartmentalization as well as by interactions with other cofactors or corepressors. NF-kappa-B complexes are held in the cytoplasm in an inactive state complexed with members of the NF-kappa-B inhibitor (I-kappa-B) family. In a conventional activation pathway, I-kappa-B is phosphorylated by I-kappa-B kinases (IKKs) in response to different activators, subsequently degraded thus liberating the active NF-kappa-B complex which translocates to the nucleus. In a non-canonical activation pathway, the MAP3K14-activated CHUK/IKKA homodimer phosphorylates NFKB2/p100 associated with RelB, inducing its proteolytic processing to NFKB2/p52 and the formation of NF-kappa-B RelB-p52 complexes. The NF-kappa-B heterodimeric RelB-p52 complex is a transcriptional activator. NFKB2 appears to have dual functions such as cytoplasmic retention of attached NF-kappa-B proteins by p100 and generation of p52 by a cotranslational processing. The proteasome-mediated process ensures the production of both p52 and p100 and preserves their independent function. p52 binds to the kappa-B consensus sequence 5'-GGRNNYYCC-3', located in the enhancer region of genes involved in immune response and acute phase reactions. In concert with RELB, may play a role in the regulation of the circadian clock. The chain is Nuclear factor NF-kappa-B p100 subunit (NFKB2) from Gallus gallus (Chicken).